The chain runs to 314 residues: Methionyl-tRNA formyltransferase (314 aa).

Residue 111–114 (SLLP) participates in (6S)-5,6,7,8-tetrahydrofolate binding.

Belongs to the Fmt family.

The catalysed reaction is L-methionyl-tRNA(fMet) + (6R)-10-formyltetrahydrofolate = N-formyl-L-methionyl-tRNA(fMet) + (6S)-5,6,7,8-tetrahydrofolate + H(+). Attaches a formyl group to the free amino group of methionyl-tRNA(fMet). The formyl group appears to play a dual role in the initiator identity of N-formylmethionyl-tRNA by promoting its recognition by IF2 and preventing the misappropriation of this tRNA by the elongation apparatus. In Chlorobium luteolum (strain DSM 273 / BCRC 81028 / 2530) (Pelodictyon luteolum), this protein is Methionyl-tRNA formyltransferase.